Consider the following 572-residue polypeptide: Phosphoenolpyruvate-protein phosphotransferase (572 aa).

H191 (tele-phosphohistidine intermediate) is an active-site residue. Phosphoenolpyruvate is bound by residues R298 and R334. Residues E433 and D457 each contribute to the Mg(2+) site. Residues 456–457 (ND) and R467 each bind phosphoenolpyruvate. Residue C504 is the Proton donor of the active site.

This sequence belongs to the PEP-utilizing enzyme family. Homodimer. It depends on Mg(2+) as a cofactor.

It localises to the cytoplasm. The catalysed reaction is L-histidyl-[protein] + phosphoenolpyruvate = N(pros)-phospho-L-histidyl-[protein] + pyruvate. In terms of biological role, general (non sugar-specific) component of the phosphoenolpyruvate-dependent sugar phosphotransferase system (sugar PTS). This major carbohydrate active-transport system catalyzes the phosphorylation of incoming sugar substrates concomitantly with their translocation across the cell membrane. Enzyme I transfers the phosphoryl group from phosphoenolpyruvate (PEP) to the phosphoryl carrier protein (HPr). This chain is Phosphoenolpyruvate-protein phosphotransferase (ptsI), found in Staphylococcus aureus (strain Mu50 / ATCC 700699).